We begin with the raw amino-acid sequence, 425 residues long: E3 ubiquitin-protein ligase GW2 (425 aa).

The RING-type; degenerate zinc finger occupies 62 to 105 (CPICFLYYPSLNRSKCCSKGICTECFLQMKPTHTAQPTQCPFCK).

In terms of tissue distribution, expressed in roots, shoots, leaves, inflorescence meristems, stamens, pistils, spikelet hulls and endosperms 4 days after fertilization.

Its subcellular location is the cytoplasm. The enzyme catalyses S-ubiquitinyl-[E2 ubiquitin-conjugating enzyme]-L-cysteine + [acceptor protein]-L-lysine = [E2 ubiquitin-conjugating enzyme]-L-cysteine + N(6)-ubiquitinyl-[acceptor protein]-L-lysine.. Its pathway is protein modification; protein ubiquitination. Functionally, E3 ubiquitin-protein ligase involved in the regulation of grain size. May limit grain width and weight by restricting cell proliferation of the spikelet hull. Possesses E3 ubiquitin-protein ligase activity in vitro. The protein is E3 ubiquitin-protein ligase GW2 of Oryza sativa subsp. indica (Rice).